The sequence spans 143 residues: Heat shock protein 16 (143 aa).

In terms of domain architecture, sHSP spans 30 to 143 (QIPGELSPSI…SQTKKQIAIK (114 aa)).

Belongs to the small heat shock protein (HSP20) family.

It is found in the cytoplasm. It localises to the nucleus. This chain is Heat shock protein 16 (hsp16), found in Schizosaccharomyces pombe (strain 972 / ATCC 24843) (Fission yeast).